The chain runs to 159 residues: Phosphopantetheine adenylyltransferase (159 aa).

T10 is a binding site for substrate. ATP-binding positions include 10 to 11 (TF) and H18. Residues K42, L74, and R88 each coordinate substrate. Residues 89–91 (GLR), E99, and 124–130 (NSFISST) contribute to the ATP site.

The protein belongs to the bacterial CoaD family. In terms of assembly, homohexamer. Mg(2+) is required as a cofactor.

The protein localises to the cytoplasm. It catalyses the reaction (R)-4'-phosphopantetheine + ATP + H(+) = 3'-dephospho-CoA + diphosphate. Its pathway is cofactor biosynthesis; coenzyme A biosynthesis; CoA from (R)-pantothenate: step 4/5. Its function is as follows. Reversibly transfers an adenylyl group from ATP to 4'-phosphopantetheine, yielding dephospho-CoA (dPCoA) and pyrophosphate. The protein is Phosphopantetheine adenylyltransferase of Shewanella pealeana (strain ATCC 700345 / ANG-SQ1).